The primary structure comprises 358 residues: Neutral protease 2 homolog PABG_02362 (358 aa).

The N-terminal stretch at 1 to 19 is a signal peptide; the sequence is MRRVSGILAVAAFTISAFA. The propeptide occupies 20-182; that stretch reads GVIQPVAKDA…FAAMNQFVKI (163 aa). 2 disulfides stabilise this stretch: Cys-188–Cys-259 and Cys-266–Cys-284. Asn-249 is a glycosylation site (N-linked (GlcNAc...) asparagine). Residue His-309 participates in Zn(2+) binding. Glu-310 is an active-site residue. Zn(2+) contacts are provided by His-313 and Asp-324.

Belongs to the peptidase M35 family. It depends on Zn(2+) as a cofactor.

It is found in the secreted. The enzyme catalyses Preferential cleavage of bonds with hydrophobic residues in P1'. Also 3-Asn-|-Gln-4 and 8-Gly-|-Ser-9 bonds in insulin B chain.. Its function is as follows. Secreted metalloproteinase that allows assimilation of proteinaceous substrates. Shows high activities on basic nuclear substrates such as histone and protamine. In Paracoccidioides brasiliensis (strain Pb03), this protein is Neutral protease 2 homolog PABG_02362.